We begin with the raw amino-acid sequence, 463 residues long: MKRALERLRQLPRANERFNIFNSVNLSAAQQVMPSEKPLGNLVVGIKDNIVTKKLPTTCSSGVLAGYMSPYDATVVELLDEAGAVTAGKTNMDEFGMGSGGIHSFFGPTLNPAFPERPTVAGGSSSGSAAAVAAGVVDFALGTDTGGSVRMPAAYTSTVGFKPSYGRVSRHGVIAYAQSLDTVGIGARDVGLVRRVFEVLDRHDPKDPTSLPDELRQQAAALRREKKHLKIGIPAELLHGSVAAEIRERLLVVLDKLQAQGHELYPVSVPAVKNSLLVYYMLAPAEAASNLARYDGIRYGCRDEDLDMSDEVLFAPTRGKFGKEVKNRIVLGNYNLCSGAFKNNYMKAQKLRVELINQFDSIFAFENICTGNKPNPAGVDVLLSLTCMAPPPSLEAFTSKENKSPVNSYINDVFTVPMSLAGLPCISVPLAGMKGVGIQLTAQFADDYGLLDAAEDVMQEQLN.

Active-site charge relay system residues include Lys47 and Ser124. Ser148 acts as the Acyl-ester intermediate in catalysis.

It belongs to the amidase family. GatA subfamily. In terms of assembly, subunit of the heterotrimeric GatFAB amidotransferase (AdT) complex, composed of A, B and F subunits.

The protein resides in the mitochondrion. The enzyme catalyses L-glutamyl-tRNA(Gln) + L-glutamine + ATP + H2O = L-glutaminyl-tRNA(Gln) + L-glutamate + ADP + phosphate + H(+). In terms of biological role, allows the formation of correctly charged Gln-tRNA(Gln) through the transamidation of misacylated Glu-tRNA(Gln) in the mitochondria. The reaction takes place in the presence of glutamine and ATP through an activated gamma-phospho-Glu-tRNA(Gln). This chain is Glutamyl-tRNA(Gln) amidotransferase subunit A, mitochondrial, found in Eremothecium gossypii (strain ATCC 10895 / CBS 109.51 / FGSC 9923 / NRRL Y-1056) (Yeast).